A 659-amino-acid polypeptide reads, in one-letter code: Polyamine transporter 4 (659 aa).

Polar residues-rich tracts occupy residues 1–20 (MPSS…NIQQ) and 28–45 (NVTN…TGSI). The interval 1-81 (MPSSLTKTES…LDWDGPDDPD (81 aa)) is disordered. At 1-99 (MPSSLTKTES…KKWYTTMTSA (99 aa)) the chain is on the cytoplasmic side. Residues 100 to 120 (FLCLVVTMGSSLYVSSVPELV) traverse the membrane as a helical segment. The Extracellular segment spans residues 121-128 (ERYHVSQT). Residues 129-149 (LALAGLTFYLLGLSTVIGAPL) form a helical membrane-spanning segment. The Cytoplasmic portion of the chain corresponds to 150 to 157 (SEVFGRKP). The chain crosses the membrane as a helical span at residues 158–178 (VYLFSLPVSMLFTMGVGLSNG). The Extracellular segment spans residues 179–187 (HMRIILPLR). A helical membrane pass occupies residues 188–208 (FLSGVFASPALSVGSGTILDI). The Cytoplasmic segment spans residues 209 to 215 (FDVDQVS). A helical transmembrane segment spans residues 216 to 236 (VAMTYFVLSPFLGPVLSPIMA). Residues 237–246 (GFATEAKGWR) lie on the Extracellular side of the membrane. A helical transmembrane segment spans residues 247-267 (WSEWIQLIAGGLILPFIALMP). Residues 268–316 (ETHKGIILRKRAKKRNIALKKFSREAQKEFLKTTVTITILRPLKMLVVE) are Cytoplasmic-facing. The helical transmembrane segment at 317–337 (PIVFVFSVYVAFIFAILFGFF) threads the bilayer. The Extracellular segment spans residues 338–355 (EAYAVIYRGVYHMSMGIS). A helical transmembrane segment spans residues 356–376 (GLPFIGIGVGLWIGAFFYLYI). Residues 377 to 423 (DRKYLFPKPPAGTQPLTEKERTSKRTTPYRGARDAETGELLPVVPEK) are Cytoplasmic-facing. The segment at 387 to 408 (AGTQPLTEKERTSKRTTPYRGA) is disordered. A helical membrane pass occupies residues 424 to 444 (FLIACKFGSVALPIGLFWQAW). Residues 445 to 456 (TARSDVHWMAPV) are Extracellular-facing. The helical transmembrane segment at 457–477 (AAGVPFGFGLILIFFSVLMYF) threads the bilayer. Residues 478-486 (STCYPPLTV) lie on the Cytoplasmic side of the membrane. Residues 487-509 (ASCLAANNLLRYVMSSVFPLFTI) form a helical membrane-spanning segment. The Extracellular segment spans residues 510-518 (QMYTKMKIK). A helical transmembrane segment spans residues 519–539 (WASTLFALVCVVMIPIPWVFE). The Cytoplasmic portion of the chain corresponds to 540–659 (KWGSKLRHKS…MATDASARMV (120 aa)). Residues 587–602 (METDPSTREKPGERLS) show a composition bias toward basic and acidic residues. The segment at 587 to 631 (METDPSTREKPGERLSLRRTHTQPVPASFDREDGQHAQNRNEPIS) is disordered. Residues threonine 589, threonine 606, and threonine 608 each carry the phosphothreonine modification. Positions 622–631 (HAQNRNEPIS) are enriched in polar residues. Phosphoserine is present on residues serine 633 and serine 646.

Belongs to the major facilitator superfamily. DHA1 family. Polyamines/proton antiporter (TC 2.A.1.2.16) subfamily.

Its subcellular location is the cell membrane. In terms of biological role, cell membrane polyamine/proton antiporter, involved in the detoxification of excess polyamines in the cytoplasm. Recognizes spermidine, spermine and the antimalarial drug quinidine, but not quinine, chloroquine and mefloquine. The chain is Polyamine transporter 4 (TPO4) from Saccharomyces cerevisiae (strain ATCC 204508 / S288c) (Baker's yeast).